A 484-amino-acid polypeptide reads, in one-letter code: Protein nucleotidyltransferase YdiU (484 aa).

ATP is bound by residues glycine 87, glycine 89, arginine 90, lysine 110, aspartate 122, glycine 123, arginine 173, and arginine 180. Residue aspartate 249 is the Proton acceptor of the active site. Positions 250 and 259 each coordinate Mg(2+). Position 259 (aspartate 259) interacts with ATP.

Belongs to the SELO family. The cofactor is Mg(2+). Mn(2+) is required as a cofactor.

The catalysed reaction is L-seryl-[protein] + ATP = 3-O-(5'-adenylyl)-L-seryl-[protein] + diphosphate. It carries out the reaction L-threonyl-[protein] + ATP = 3-O-(5'-adenylyl)-L-threonyl-[protein] + diphosphate. The enzyme catalyses L-tyrosyl-[protein] + ATP = O-(5'-adenylyl)-L-tyrosyl-[protein] + diphosphate. It catalyses the reaction L-histidyl-[protein] + UTP = N(tele)-(5'-uridylyl)-L-histidyl-[protein] + diphosphate. The catalysed reaction is L-seryl-[protein] + UTP = O-(5'-uridylyl)-L-seryl-[protein] + diphosphate. It carries out the reaction L-tyrosyl-[protein] + UTP = O-(5'-uridylyl)-L-tyrosyl-[protein] + diphosphate. Functionally, nucleotidyltransferase involved in the post-translational modification of proteins. It can catalyze the addition of adenosine monophosphate (AMP) or uridine monophosphate (UMP) to a protein, resulting in modifications known as AMPylation and UMPylation. In Lachnoclostridium phytofermentans (strain ATCC 700394 / DSM 18823 / ISDg) (Clostridium phytofermentans), this protein is Protein nucleotidyltransferase YdiU.